The sequence spans 107 residues: Putative double-stranded DNA mimic protein ETA_15890 (107 aa).

This sequence belongs to the putative dsDNA mimic protein family.

Its function is as follows. May act as a double-stranded DNA (dsDNA) mimic. Probably regulates the activity of a dsDNA-binding protein. This chain is Putative double-stranded DNA mimic protein ETA_15890, found in Erwinia tasmaniensis (strain DSM 17950 / CFBP 7177 / CIP 109463 / NCPPB 4357 / Et1/99).